Reading from the N-terminus, the 235-residue chain is Cytochrome c-554 (235 aa).

A signal peptide spans 1–24; the sequence is MKIMIACGLVAAALFTLTSGQSLA. Heme-binding residues include Cys-35, Cys-38, His-39, His-51, Cys-84, Cys-87, His-88, Cys-112, Cys-115, His-116, His-126, Cys-158, Cys-161, His-162, and His-203. Residues 121–144 are disordered; that stretch reads NFRGDHRKSGQAFEKSGKKTPRKD.

Binds 4 heme groups per subunit.

The protein resides in the periplasm. Functionally, involved in ammonia oxidation; accepts electrons directly from hydroxylamine oxidoreductase (HAO). The polypeptide is Cytochrome c-554 (cycA1) (Nitrosomonas europaea (strain ATCC 19718 / CIP 103999 / KCTC 2705 / NBRC 14298)).